We begin with the raw amino-acid sequence, 65 residues long: MARRDALTGKSALSGQSRSHALNATKRKWNLNLQKVRVMNENGSVFNIKVSARTLRTLKKQEKIV.

Residues 1-26 (MARRDALTGKSALSGQSRSHALNATK) are disordered. Positions 11–22 (SALSGQSRSHAL) are enriched in polar residues.

Belongs to the bacterial ribosomal protein bL28 family.

The polypeptide is Large ribosomal subunit protein bL28 (Mycoplasma mycoides subsp. mycoides SC (strain CCUG 32753 / NCTC 10114 / PG1)).